The sequence spans 327 residues: DNA-directed RNA polymerase subunit alpha (327 aa).

The tract at residues 1 to 233 (MVREKVKVST…NLFIPFLHVE (233 aa)) is alpha N-terminal domain (alpha-NTD). An alpha C-terminal domain (alpha-CTD) region spans residues 267-327 (LAFQYIFIDQ…KKILDILEKK (61 aa)).

The protein belongs to the RNA polymerase alpha chain family. In plastids the minimal PEP RNA polymerase catalytic core is composed of four subunits: alpha, beta, beta', and beta''. When a (nuclear-encoded) sigma factor is associated with the core the holoenzyme is formed, which can initiate transcription.

Its subcellular location is the plastid. It localises to the chloroplast. It carries out the reaction RNA(n) + a ribonucleoside 5'-triphosphate = RNA(n+1) + diphosphate. Its function is as follows. DNA-dependent RNA polymerase catalyzes the transcription of DNA into RNA using the four ribonucleoside triphosphates as substrates. This Lobularia maritima (Sweet alyssum) protein is DNA-directed RNA polymerase subunit alpha.